The following is a 1013-amino-acid chain: Nucleotide-binding oligomerization domain-containing protein 2 (1013 aa).

2 consecutive CARD domains span residues 1-82 (MCSQ…AVQE) and 107-178 (LQSH…HVQK). Residues 36–50 (WEVLSWEDYEGLRLV) carry the ATG16L1-binding motif motif. ADP-binding residues include T212, Y225, T226, G275, S276, G277, K278, S279, and T280. Residues 214–247 (DGAENLCLEDIYTENTLEVRTEVGMAGPLHKSPA) form a required for CARD9 binding region. One can recognise an NACHT domain in the interval 266–402 (DTVLVVGEAG…RKVLTSRPDA (137 aa)). 272–279 (GEAGSGKS) provides a ligand contact to ATP. C368 carries S-palmitoyl cysteine lipidation. Residue H576 coordinates ADP. LRR repeat units lie at residues 764–785 (RPVA…QLLP), 789–812 (ACKA…IEHA), 817–838 (QLQK…SVAQ), 845–857 (NFLA…NHIT), 873–893 (SLQF…QALA), 901–922 (SLKW…ALAS), 929–949 (ALEE…CSLA), 957–978 (SLKV…ALLQ), and 985–1005 (TILE…EALS).

The protein belongs to the NOD1-NOD2 family. As to quaternary structure, homooligomer: homooligomerizes following muramyl dipeptide (MDP)-binding, promoting RIPK2 recruitment. Interacts (via CARD domain) with RIPK2 (via CARD domain). Following RIPK2 recruitment, RIPK2 homooligomerizes via its CARD domain and forms long filaments named RIPosomes. Interacts (via CARD domain) with ubiquitin; inhibiting interaction with RIPK2. Component of a signaling complex consisting of ARHGEF2, NOD2 and RIPK2. Interacts with ANKRD17 (via N-terminus). Interacts with HSPA1A; the interaction enhances NOD2 stability. Interacts (via both CARD domains) with HSP90; the interaction enhances NOD2 stability. Interacts (via CARD domain) with SOCS3; the interaction promotes NOD2 degradation. Interacts (via CARD domain) with ERBIN; the interaction inhibits activation of NOD2. Interacts with MAPKBP1; the interaction is enhanced in the presence of muramyl dipeptide (MDP) and inhibits NOD2 homooligomerization and activation. Interacts with INAVA; the interaction takes place upon Pattern recognition receptor (PRR) stimulation. Interacts (via NACHT domain) with CARD9. Interacts (via CARD domain) with CASP1; this interaction leads to IL1B processing. Also interacts with CASP4. Interacts with NLRP1; this interaction is enhanced in the presence of muramyl dipeptide (MDP) and leads to increased IL1B release. Interacts with NLRP12; this interaction promotes degradation of NOD2 through the ubiquitin-proteasome pathway. Interacts with ANKHD1, C10orf67, CHMP5, DOCK7, ENTR1, KRT15, LDOC1, PPP1R12C, PPP2R3B, TRIM41 and VIM. Interacts with MAVS; interaction takes place following single-stranded RNA (ssRNA)-binding. Interacts with ATG16L1. Interacts with IRGM; promoting IRGM 'Lys-63'-linked polyubiquitination, which is required for interactions with the core autophagy factors. Post-translationally, palmitoylated by ZDHHC5; palmitoylation is required for proper recruitment to the bacterial entry site and hence for proper signaling upon cognate peptidoglycan detection. Palmitoylation promotes localization to the cell membrane. Palmitoylation protects from SQSTM1/p62-dependent autophagic degradation. Polyubiquitinated by TRIM27, leading to proteasome-mediated degradation. Polyubiquitinated and degraded following muramyl dipeptide (MDP) stimulation, conferring MDP tolerance and preventing septic shock. In terms of processing, degraded via selective autophagy following interaction with IRGM. IRGM promotes NOD2-RIPK2 RIPosome recruitment to autophagosome membranes, promoting their SQSTM1/p62-dependent autophagic degradation. Post-translationally, O-glycosylated by OGT, O-GlcNAcylation increases protein stability.

Its subcellular location is the cell membrane. It is found in the basolateral cell membrane. The protein localises to the cytoplasm. The protein resides in the mitochondrion. Its activity is regulated as follows. ADP-binding promotes an inactive closed conformation. Its function is as follows. Pattern recognition receptor (PRR) that detects bacterial peptidoglycan fragments and other danger signals and plays an important role in gastrointestinal immunity. Specifically activated by muramyl dipeptide (MDP), a fragment of bacterial peptidoglycan found in every bacterial peptidoglycan type. NOD2 specifically recognizes and binds 6-O-phospho-MDP, the phosphorylated form of MDP, which is generated by NAGK. 6-O-phospho-MDP-binding triggers oligomerization that facilitates the binding and subsequent activation of the proximal adapter receptor-interacting RIPK2. Following recruitment, RIPK2 undergoes 'Met-1'- (linear) and 'Lys-63'-linked polyubiquitination by E3 ubiquitin-protein ligases XIAP, BIRC2, BIRC3 and the LUBAC complex, becoming a scaffolding protein for downstream effectors, triggering activation of the NF-kappa-B and MAP kinases signaling. This in turn leads to the transcriptional activation of hundreds of genes involved in immune response. Its ability to detect bacterial MDP plays a central role in maintaining the equilibrium between intestinal microbiota and host immune responses to control inflammation. An imbalance in this relationship results in dysbiosis, whereby pathogenic bacteria prevail on commensals, causing damage in the intestinal epithelial barrier as well as allowing bacterial invasion and inflammation. Acts as a regulator of appetite by sensing MDP in a subset of brain neurons: microbiota-derived MDP reach the brain, where they bind and activate NOD2 in inhibitory hypothalamic neurons, decreasing neuronal activity, thereby regulating satiety and body temperature. NOD2-dependent MDP-sensing of bacterial cell walls in the intestinal epithelial compartment contributes to sustained postnatal growth upon undernutrition. Also plays a role in antiviral response by acting as a sensor of single-stranded RNA (ssRNA) from viruses: upon ssRNA-binding, interacts with MAVS, leading to activation of interferon regulatory factor-3/IRF3 and expression of type I interferon. Also acts as a regulator of autophagy in dendritic cells via its interaction with ATG16L1, possibly by recruiting ATG16L1 at the site of bacterial entry. NOD2 activation in the small intestine crypt also contributes to intestinal stem cells survival and function: acts by promoting mitophagy via its association with ATG16L1. In addition to its main role in innate immunity, also regulates the adaptive immune system by acting as regulator of helper T-cell and regulatory T-cells (Tregs). Besides recognizing pathogens, also involved in the endoplasmic reticulum stress response: acts by sensing and binding to the cytosolic metabolite sphingosine-1-phosphate generated in response to endoplasmic reticulum stress, initiating an inflammation process that leads to activation of the NF-kappa-B and MAP kinases signaling. May also be involved in NLRP1 activation following activation by MDP, leading to CASP1 activation and IL1B release in macrophages. This chain is Nucleotide-binding oligomerization domain-containing protein 2, found in Oryctolagus cuniculus (Rabbit).